We begin with the raw amino-acid sequence, 64 residues long: Large ribosomal subunit protein bL35 (64 aa).

This sequence belongs to the bacterial ribosomal protein bL35 family.

In Acidothermus cellulolyticus (strain ATCC 43068 / DSM 8971 / 11B), this protein is Large ribosomal subunit protein bL35.